The sequence spans 184 residues: Shikimate kinase (184 aa).

20–25 lines the ATP pocket; that stretch reads GVGKSR. Mg(2+) is bound at residue S24. Residues D42, R66, and G88 each contribute to the substrate site. Residue R127 participates in ATP binding. R146 contributes to the substrate binding site. R162 provides a ligand contact to ATP.

This sequence belongs to the shikimate kinase family. As to quaternary structure, monomer. Mg(2+) is required as a cofactor.

Its subcellular location is the cytoplasm. It carries out the reaction shikimate + ATP = 3-phosphoshikimate + ADP + H(+). The protein operates within metabolic intermediate biosynthesis; chorismate biosynthesis; chorismate from D-erythrose 4-phosphate and phosphoenolpyruvate: step 5/7. Its function is as follows. Catalyzes the specific phosphorylation of the 3-hydroxyl group of shikimic acid using ATP as a cosubstrate. The sequence is that of Shikimate kinase from Thermus thermophilus (strain ATCC 27634 / DSM 579 / HB8).